Reading from the N-terminus, the 217-residue chain is Non-structural protein NS3 (217 aa).

Belongs to the orbivirus NS3 family.

In terms of biological role, may play a role in the release of virions from infected cells. The protein is Non-structural protein NS3 (Segment-10) of African horse sickness virus (AHSV).